Reading from the N-terminus, the 493-residue chain is 3-octaprenyl-4-hydroxybenzoate carboxy-lyase (493 aa).

A Mn(2+)-binding site is contributed by Asn-172. Prenylated FMN-binding positions include 175 to 177 (IYR), 189 to 191 (RWL), and 194 to 195 (RG). Glu-238 lines the Mn(2+) pocket. The active-site Proton donor is Asp-287.

It belongs to the UbiD family. As to quaternary structure, homohexamer. Prenylated FMN serves as cofactor. Mn(2+) is required as a cofactor.

Its subcellular location is the cell membrane. It carries out the reaction a 4-hydroxy-3-(all-trans-polyprenyl)benzoate + H(+) = a 2-(all-trans-polyprenyl)phenol + CO2. It participates in cofactor biosynthesis; ubiquinone biosynthesis. Its function is as follows. Catalyzes the decarboxylation of 3-octaprenyl-4-hydroxy benzoate to 2-octaprenylphenol, an intermediate step in ubiquinone biosynthesis. This is 3-octaprenyl-4-hydroxybenzoate carboxy-lyase from Shewanella sp. (strain ANA-3).